Reading from the N-terminus, the 267-residue chain is MASKRIPLVAGNWKMNFDHLEATYFVQKLVWLLRDAHFDFKRCEVALFPSFTSLRSVQVLVEADKLHVAYGAQSVSVTTQGAFTGDVSADMIAHLGCSYVIVGHSERRKYHPEDDANIVDQVRAVLAAGMQPILCVGESFEERRQGIELDFAVGQVRDVTRDLNEEQAAKLIVAYEPVWAIGTGMVATPQSAQDAANAIRNDLKTTFGTKVSDSVRILYGGSVTSKNAAELISQPDVDGFLIGGAALDVEELAKIARLALKSTKSRN.

12 to 14 lines the substrate pocket; it reads NWK. The Electrophile role is filled by His104. The active-site Proton acceptor is Glu176. Substrate-binding positions include Gly182, Ser222, and 243 to 244; that span reads GG.

It belongs to the triosephosphate isomerase family. In terms of assembly, homodimer.

The protein resides in the cytoplasm. The catalysed reaction is D-glyceraldehyde 3-phosphate = dihydroxyacetone phosphate. It participates in carbohydrate biosynthesis; gluconeogenesis. It functions in the pathway carbohydrate degradation; glycolysis; D-glyceraldehyde 3-phosphate from glycerone phosphate: step 1/1. Functionally, involved in the gluconeogenesis. Catalyzes stereospecifically the conversion of dihydroxyacetone phosphate (DHAP) to D-glyceraldehyde-3-phosphate (G3P). This chain is Triosephosphate isomerase, found in Bifidobacterium longum (strain DJO10A).